The sequence spans 230 residues: Sugar fermentation stimulation protein homolog (230 aa).

This sequence belongs to the SfsA family.

This Clostridium botulinum (strain Loch Maree / Type A3) protein is Sugar fermentation stimulation protein homolog.